The sequence spans 221 residues: Glutathione S-transferase (221 aa).

Met-1 carries the post-translational modification N-acetylmethionine. The residue at position 2 (Ala-2) is an N-acetylalanine; in Glutathione S-transferase, N-terminally processed. A GST N-terminal domain is found at Gly-3–Gly-82. Residues Tyr-9, Lys-45, Gln-53–Val-54, and Gln-66–Thr-67 each bind glutathione. A GST C-terminal domain is found at Asp-84–Asp-208.

Belongs to the GST superfamily. Alpha family. In terms of assembly, homodimer or heterodimer of GSTA1 and GSTA2.

It localises to the cytoplasm. It carries out the reaction RX + glutathione = an S-substituted glutathione + a halide anion + H(+). The catalysed reaction is prostaglandin A2 + glutathione = prostaglandin A2-S-(R)-glutathione. The enzyme catalyses prostaglandin J2 + glutathione = prostaglandin J2-S-(R)-glutathione. It catalyses the reaction (13S)-hydroperoxy-(9Z,11E)-octadecadienoate + 2 glutathione = (13S)-hydroxy-(9Z,11E)-octadecadienoate + glutathione disulfide + H2O. It carries out the reaction androst-5-ene-3,17-dione = androst-4-ene-3,17-dione. Functionally, glutathione S-transferase that catalyzes the nucleophilic attack of the sulfur atom of glutathione on the electrophilic groups of a wide range of exogenous and endogenous compounds. Involved in the formation of glutathione conjugates of both prostaglandin A2 (PGA2) and prostaglandin J2 (PGJ2). It also catalyzes the isomerization of D5-androstene-3,17-dione (AD) into D4-androstene-3,17-dione and may therefore play an important role in hormone biosynthesis. Through its glutathione-dependent peroxidase activity toward the fatty acid hydroperoxide (13S)-hydroperoxy-(9Z,11E)-octadecadienoate/13-HPODE it is also involved in the metabolism of oxidized linoleic acid. This is Glutathione S-transferase from Antechinus stuartii (Brown marsupial mouse).